The following is a 3341-amino-acid chain: Genome polyprotein (3341 aa).

2 stretches are compositionally biased toward basic and acidic residues: residues 1–14 and 24–35; these read MKRKDLEARGKAPG and REGRRKDKDKGG. The segment at 1–57 is disordered; that stretch reads MKRKDLEARGKAPGRDSSTPFWGREGRRKDKDKGGESPSNRQVTLKTPIQSGRRAGK. Residues 1–120 are Cytoplasmic-facing; the sequence is MKRKDLEARG…LESRRTTGNP (120 aa). Polar residues predominate over residues 37-50; that stretch reads SPSNRQVTLKTPIQ. The hydrophobic; homodimerization of capsid protein C stretch occupies residues 55-97; that stretch reads AGKRQRVGLLGRLGVGWGSFLQEDIVQALIHMALVLHALFASI. The propeptide at 117–136 is ER anchor for the capsid protein C, removed in mature form by serine protease NS3; sequence TGNPMTLAFILGFLTVLCGC. A helical transmembrane segment spans residues 121-141; the sequence is MTLAFILGFLTVLCGCVVIDM. Residues 142-245 lie on the Extracellular side of the membrane; sequence QVSTTRGTEI…AFKTIRENKT (104 aa). N-linked (GlcNAc...) asparagine; by host glycosylation is found at N157 and N243. The chain crosses the membrane as a helical span at residues 246-262; it reads IFIVALLCVAIAKRWPT. Residue W263 is a topological domain, cytoplasmic. The chain crosses the membrane as a helical span at residues 264 to 278; that stretch reads VVILLAIGTWTTVKG. Residues 279 to 665 are Extracellular-facing; that stretch reads EFVEPLYTLK…GVWQDLVGKF (387 aa). N339 carries N-linked (GlcNAc...) asparagine; by host glycosylation. An involved in fusion region spans residues 371–384; sequence NRGWGTGCFKWGIG. N-linked (GlcNAc...) asparagine; by host glycosylation is found at N399, N411, N575, and N611. The helical transmembrane segment at 666 to 686 threads the bilayer; it reads SVGAFFSNTALLVILVLAALI. The Cytoplasmic portion of the chain corresponds to 687–689; sequence DKR. Residues 690–705 form a helical membrane-spanning segment; that stretch reads IAFLLVLGGYFYYVRA. Residues 706-1138 are Extracellular-facing; the sequence is DLGCGIDTTR…AKTRTSTLTR (433 aa). N794, N896, N993, and N1027 each carry an N-linked (GlcNAc...) asparagine; by host glycan. A helical membrane pass occupies residues 1139–1159; it reads LFLTILAMALFGLPNLFSSVG. Topologically, residues 1160-1178 are cytoplasmic; that stretch reads LSAWVLLVASSSAQPQDLS. A helical membrane pass occupies residues 1179-1199; the sequence is MNLWIVLQTGSSAVLLLGYMI. Residues 1200-1204 are Lumenal-facing; it reads RRKLA. Residues 1205-1225 traverse the membrane as a helical segment; sequence MVLGVHHLVTLMCVQFLFSAV. Over 1226–1231 the chain is Cytoplasmic; sequence DRYQKY. Residues 1232–1252 form a helical membrane-spanning segment; that stretch reads LYGLLELMASVVLLSAYKSVL. Topologically, residues 1253-1261 are lumenal; that stretch reads QALPPEVLC. Residues 1262-1282 traverse the membrane as a helical segment; sequence FSLVMGWKTALSLATVVFLIF. The Cytoplasmic segment spans residues 1283 to 1303; it reads SLNAMYKYACQYHNPRNGYRD. A helical transmembrane segment spans residues 1304–1324; sequence SGANLWFWTVSLASAGGIWAA. Residues 1325 to 1326 lie on the Lumenal side of the membrane; that stretch reads EK. Residues 1327–1347 traverse the membrane as a helical segment; it reads AHQPTVAAVLAFTMVVLFLYM. Over 1348–1403 the chain is Cytoplasmic; sequence EQTNVSMELEFISAGETPEGVSTENDDGINIPDLKGRYGEDGIVVGAASSSGYLPE. An intramembrane region (helical) is located at residues 1404-1424; that stretch reads LVFVFLLGFAVTSTSYFLGAL. The Cytoplasmic segment spans residues 1425–2089; sequence YLLIATSTNL…TERSLTVVMA (665 aa). Residues 1452–1630 form the Peptidase S7 domain; that stretch reads SDDLLGLGGP…KPTDVTESLN (179 aa). Active-site charge relay system; for serine protease NS3 activity residues include H1506, D1530, and S1589. The Helicase ATP-binding domain occupies 1627–1780; sequence ESLNCDSTRR…SNYAISDQSI (154 aa). An ATP-binding site is contributed by 1640 to 1647; it reads WHPGKGKT. The DECH box motif lies at 1729 to 1732; the sequence is DECH. Residues 1793 to 1947 form the Helicase C-terminal domain; that stretch reads NVQKSVGAKK…TFMLEEAAYS (155 aa). Residues 2090-2110 traverse the membrane as a helical segment; sequence FVLGVSIMLSCFIAVWALCFL. Topologically, residues 2111–2145 are lumenal; it reads FSLFRPKKATYEQMPSSDPLSGGVLVSTPSVLYCM. The helical transmembrane segment at 2146 to 2166 threads the bilayer; that stretch reads GVPLGFCVVITLAMFLVYPVL. Residues 2167 to 2178 are Cytoplasmic-facing; the sequence is YKSIGNRSYMDS. Residues 2179 to 2199 traverse the membrane as a helical segment; sequence DLVKWVILGSCLICGVLAWEM. Residues 2200–2242 lie on the Lumenal side of the membrane; that stretch reads RMFPNIRSDLMELVKAVKEPEEVVNSGPSFPSWEIAQGKGATM. A helical membrane pass occupies residues 2243-2263; the sequence is LDSLQVFFFITVLSTKFLYWF. Topologically, residues 2264 to 2302 are cytoplasmic; sequence QENWTARMYAMKHPEMVSSIGGFRFDEIPFRAVLPSGFA. Residues 2303–2323 constitute an intramembrane region (helical); the sequence is IVAIASLPSVVVGLLAAGVFM. Residues 2324–2366 lie on the Cytoplasmic side of the membrane; the sequence is AIMYCQNKWNATPKILTALDARDQRHDRPTEITSRVPLENTRS. Residues 2367–2387 traverse the membrane as a helical segment; sequence IMYAFCLIFSLFWAFCTRSPG. Over 2388–2412 the chain is Lumenal; it reads DFLRGSLVVGASMWQILHPRSKIHD. A helical membrane pass occupies residues 2413–2433; sequence VMDFGSMVSAIGLLEMNYLFY. Residues 2434–3341 are Cytoplasmic-facing; that stretch reads RFMHIAARAL…SRYRRGNDVI (908 aa). Positions 2454-2706 constitute an mRNA cap 0-1 NS5-type MT domain; it reads ALEKSTTIGL…SPVLPKGTRA (253 aa). S2497 contributes to the S-adenosyl-L-methionine binding site. Catalysis depends on K2509, which acts as the For 2'-O-MTase activity. The S-adenosyl-L-methionine site is built by G2527, W2528, T2545, I2546, D2572, and V2573. Catalysis depends on D2587, which acts as the For 2'-O-MTase activity. I2588 contributes to the S-adenosyl-L-methionine binding site. Catalysis depends on for 2'-O-MTase activity residues K2624 and E2660. Y2662 is a binding site for S-adenosyl-L-methionine. Zn(2+) contacts are provided by E2881, H2885, C2890, and C2893. The region spanning 2970–3117 is the RdRp catalytic domain; the sequence is KYLIADDIAG…STDNRDFSSA (148 aa). H3152, C3168, and C3287 together coordinate Zn(2+).

It in the N-terminal section; belongs to the class I-like SAM-binding methyltransferase superfamily. mRNA cap 0-1 NS5-type methyltransferase family. In terms of assembly, homodimer. As to quaternary structure, forms heterodimers with envelope protein E in the endoplasmic reticulum and Golgi. Homodimer; in the endoplasmic reticulum and Golgi. In terms of assembly, forms homodimers as well as homohexamers. NS1 may interact with NS4A. As to quaternary structure, forms a heterodimer with serine protease NS3. May form homooligomers. Forms a heterodimer with NS2B. Interacts with NS4B. Interacts with unphosphorylated RNA-directed RNA polymerase NS5; this interaction stimulates RNA-directed RNA polymerase NS5 guanylyltransferase activity. In terms of assembly, interacts with serine protease NS3. As to quaternary structure, interacts with host STAT2; this interaction inhibits the phosphorylation of the latter, and, when all viral proteins are present (polyprotein), targets STAT2 for degradation. In terms of processing, genome polyprotein: Specific enzymatic cleavages in vivo yield mature proteins. Cleavages in the lumen of endoplasmic reticulum are performed by host signal peptidase, whereas cleavages in the cytoplasmic side are performed by serine protease NS3. Signal cleavage at the 2K-4B site requires a prior NS3 protease-mediated cleavage at the 4A-2K site. Cleaved in post-Golgi vesicles by a host furin, releasing the mature small envelope protein M, and peptide pr. This cleavage is incomplete as up to 30% of viral particles still carry uncleaved prM. Post-translationally, N-glycosylated. In terms of processing, N-glycosylated. The excreted form is glycosylated and this is required for efficient secretion of the protein from infected cells. Phosphorylated on serines residues. This phosphorylation may trigger NS5 nuclear localization.

Its subcellular location is the virion. The protein resides in the host nucleus. The protein localises to the secreted. It is found in the virion membrane. It localises to the host endoplasmic reticulum membrane. It carries out the reaction Selective hydrolysis of -Xaa-Xaa-|-Yaa- bonds in which each of the Xaa can be either Arg or Lys and Yaa can be either Ser or Ala.. The enzyme catalyses RNA(n) + a ribonucleoside 5'-triphosphate = RNA(n+1) + diphosphate. It catalyses the reaction a ribonucleoside 5'-triphosphate + H2O = a ribonucleoside 5'-diphosphate + phosphate + H(+). The catalysed reaction is ATP + H2O = ADP + phosphate + H(+). It carries out the reaction a 5'-end (5'-triphosphoguanosine)-ribonucleoside in mRNA + S-adenosyl-L-methionine = a 5'-end (N(7)-methyl 5'-triphosphoguanosine)-ribonucleoside in mRNA + S-adenosyl-L-homocysteine. The enzyme catalyses a 5'-end (N(7)-methyl 5'-triphosphoguanosine)-ribonucleoside in mRNA + S-adenosyl-L-methionine = a 5'-end (N(7)-methyl 5'-triphosphoguanosine)-(2'-O-methyl-ribonucleoside) in mRNA + S-adenosyl-L-homocysteine + H(+). In terms of biological role, plays a role in virus budding by binding to the cell membrane and gathering the viral RNA into a nucleocapsid that forms the core of a mature virus particle. During virus entry, may induce genome penetration into the host cytoplasm after hemifusion induced by the surface proteins. Can migrate to the cell nucleus where it modulates host functions. Prevents premature fusion activity of envelope proteins in trans-Golgi by binding to envelope protein E at pH6.0. After virion release in extracellular space, gets dissociated from E dimers. Functionally, acts as a chaperone for envelope protein E during intracellular virion assembly by masking and inactivating envelope protein E fusion peptide. prM is the only viral peptide matured by host furin in the trans-Golgi network probably to avoid catastrophic activation of the viral fusion activity in acidic Golgi compartment prior to virion release. prM-E cleavage is inefficient, and many virions are only partially matured. These uncleaved prM would play a role in immune evasion. Its function is as follows. May play a role in virus budding. Exerts cytotoxic effects by activating a mitochondrial apoptotic pathway through M ectodomain. May display a viroporin activity. In terms of biological role, binds to host cell surface receptor and mediates fusion between viral and cellular membranes. Envelope protein is synthesized in the endoplasmic reticulum in the form of heterodimer with protein prM. They play a role in virion budding in the ER, and the newly formed immature particle is covered with 60 spikes composed of heterodimer between precursor prM and envelope protein E. The virion is transported to the Golgi apparatus where the low pH causes dissociation of PrM-E heterodimers and formation of E homodimers. prM-E cleavage is inefficient, and many virions are only partially matured. These uncleaved prM would play a role in immune evasion. Involved in immune evasion, pathogenesis and viral replication. Once cleaved off the polyprotein, is targeted to three destinations: the viral replication cycle, the plasma membrane and the extracellular compartment. May play a role in viral genome replication. Assist membrane bending and envelopment of genomic RNA at the endoplasmic reticulum. Excreted as a hexameric lipoparticle that plays a role against host immune response. Functionally, component of the viral RNA replication complex that functions in virion assembly and antagonizes the host immune response. Its function is as follows. Required cofactor for the serine protease function of NS3. May have membrane-destabilizing activity and form viroporins. In terms of biological role, displays three enzymatic activities: serine protease, NTPase and RNA helicase. NS3 serine protease, in association with NS2B, performs its autocleavage and cleaves the polyprotein at dibasic sites in the cytoplasm: C-prM, NS2A-NS2B, NS2B-NS3, NS3-NS4A, NS4A-2K and NS4B-NS5. NS3 RNA helicase binds RNA and unwinds dsRNA in the 3' to 5' direction. Regulates the ATPase activity of the NS3 helicase activity. NS4A allows NS3 helicase to conserve energy during unwinding. Functionally, functions as a signal peptide for NS4B and is required for the interferon antagonism activity of the latter. Its function is as follows. Inhibits interferon (IFN)-induced host STAT1 phosphorylation and nuclear translocation, thereby preventing the establishment of a cellular antiviral state by blocking the IFN-alpha/beta pathway. In terms of biological role, replicates the viral (+) and (-) RNA genome, and performs the capping of genomes in the cytoplasm. NS5 methylates viral RNA cap at guanine N-7 and ribose 2'-O positions. Besides its role in RNA genome replication, also prevents the establishment of cellular antiviral state by blocking the interferon-alpha/beta (IFN-alpha/beta) signaling pathway. Inhibits host TYK2 and STAT2 phosphorylation, thereby preventing activation of JAK-STAT signaling pathway. This is Genome polyprotein from Aedes (CFA flavivirus).